The primary structure comprises 563 residues: Ras and Rab interactor-like protein (563 aa).

The disordered stretch occupies residues 181-208 (GWGTETPQQTEPETGQKYSLAPRKPTPH). The segment covering 184 to 196 (TETPQQTEPETGQ) has biased composition (low complexity). Residues 381–518 (AQELRRLRRR…IAHYQPDTGR (138 aa)) enclose the VPS9 domain. The disordered stretch occupies residues 539–563 (TLHQQAQPTAQANQPFEEPWAIGDP). Low complexity predominate over residues 542-553 (QQAQPTAQANQP).

In terms of assembly, interacts with RAB5A, RAB22A and MUSK. Detected in thymus and spleen (at protein level). Detected in lung, liver, kidney, spleen, thymus and skeletal muscle.

It is found in the cell projection. Its subcellular location is the ruffle. The protein resides in the cytoplasmic vesicle. In terms of biological role, guanine nucleotide exchange factor (GEF) for RAB5A and RAB22A that activates RAB5A and RAB22A by exchanging bound GDP for free GTP. Plays a role in endocytosis via its role in activating Rab family members. The protein is Ras and Rab interactor-like protein (Rinl) of Mus musculus (Mouse).